A 628-amino-acid polypeptide reads, in one-letter code: tRNA uridine 5-carboxymethylaminomethyl modification enzyme MnmG (628 aa).

Residues 14–19, Val126, and Ser181 each bind FAD; that span reads GAGHAG. Residue 273–287 participates in NAD(+) binding; sequence GPRYCPSIEDKVVRF. Position 370 (Gln370) interacts with FAD.

It belongs to the MnmG family. Homodimer. Heterotetramer of two MnmE and two MnmG subunits. It depends on FAD as a cofactor.

The protein localises to the cytoplasm. Its function is as follows. NAD-binding protein involved in the addition of a carboxymethylaminomethyl (cmnm) group at the wobble position (U34) of certain tRNAs, forming tRNA-cmnm(5)s(2)U34. In Bacillus licheniformis (strain ATCC 14580 / DSM 13 / JCM 2505 / CCUG 7422 / NBRC 12200 / NCIMB 9375 / NCTC 10341 / NRRL NRS-1264 / Gibson 46), this protein is tRNA uridine 5-carboxymethylaminomethyl modification enzyme MnmG.